A 147-amino-acid polypeptide reads, in one-letter code: Large ribosomal subunit protein bL9 (147 aa).

It belongs to the bacterial ribosomal protein bL9 family.

Functionally, binds to the 23S rRNA. The polypeptide is Large ribosomal subunit protein bL9 (Mesoplasma florum (strain ATCC 33453 / NBRC 100688 / NCTC 11704 / L1) (Acholeplasma florum)).